Here is a 64-residue protein sequence, read N- to C-terminus: MAQEQTKRTGGGDEDDTPGGDGAAGQERREKLAEDTDDLLDEIDDVLEENAEDFVRAYVQKGGQ.

A compositionally biased stretch (basic and acidic residues) spans 1–11; the sequence is MAQEQTKRTGG. Positions 1 to 38 are disordered; sequence MAQEQTKRTGGGDEDDTPGGDGAAGQERREKLAEDTDD. Residues 21-58 form an ARC ATPase binding region; that stretch reads DGAAGQERREKLAEDTDDLLDEIDDVLEENAEDFVRAY. Positions 24-52 form a coiled coil; the sequence is AGQERREKLAEDTDDLLDEIDDVLEENAE. Position 64 is a deamidated glutamine (glutamine 64). An Isoglutamyl lysine isopeptide (Gln-Lys) (interchain with K-? in acceptor proteins) cross-link involves residue glutamine 64.

Belongs to the prokaryotic ubiquitin-like protein family. In terms of assembly, strongly interacts with the proteasome-associated ATPase ARC through a hydrophobic interface; the interacting region of Pup lies in its C-terminal half. There is one Pup binding site per ARC hexamer ring. In terms of processing, is modified by deamidation of its C-terminal glutamine to glutamate by the deamidase Dop, a prerequisite to the subsequent pupylation process.

It functions in the pathway protein degradation; proteasomal Pup-dependent pathway. Functionally, protein modifier that is covalently attached to lysine residues of substrate proteins, thereby targeting them for proteasomal degradation. The tagging system is termed pupylation. This chain is Prokaryotic ubiquitin-like protein Pup, found in Rhodococcus opacus (strain B4).